The primary structure comprises 113 residues: Protein FPV195 (113 aa).

Belongs to the poxviruses A31 family.

The protein is Protein FPV195 of Vertebrata (FPV).